Here is a 163-residue protein sequence, read N- to C-terminus: Lysosomal enzyme trafficking factor (163 aa).

The next 2 helical transmembrane spans lie at Met40–Phe60 and Leu98–Leu118.

The protein belongs to the LYSET family. Interacts with GNPTAB; this interaction is important for proper localization of GNPTAB in Golgi stacks. Interacts with MBTPS1.

It is found in the golgi apparatus membrane. In terms of biological role, required for mannose-6-phosphate-dependent trafficking of lysosomal enzymes. LYSET bridges GlcNAc-1-phosphate transferase (GNPTAB), to the membrane-bound transcription factor site-1 protease (MBTPS1), thus allowing proteolytic activation of the GNPTAB. GNPTAB is involved in the regulation of M6P-dependent Golgi-to-lysosome trafficking of lysosomal enzymes. LYSET is thus an essential factor for maturation and delivery of lysosomal hydrolases. (Microbial infection) Essential for infection by muliple viruses, including SARS-CoV-2, that utilize activated cathepsins for entry after M6P-dependent lysosomal transport. The polypeptide is Lysosomal enzyme trafficking factor (Homo sapiens (Human)).